The sequence spans 115 residues: Large ribosomal subunit protein uL22 (115 aa).

Belongs to the universal ribosomal protein uL22 family. As to quaternary structure, part of the 50S ribosomal subunit.

In terms of biological role, this protein binds specifically to 23S rRNA; its binding is stimulated by other ribosomal proteins, e.g. L4, L17, and L20. It is important during the early stages of 50S assembly. It makes multiple contacts with different domains of the 23S rRNA in the assembled 50S subunit and ribosome. Its function is as follows. The globular domain of the protein is located near the polypeptide exit tunnel on the outside of the subunit, while an extended beta-hairpin is found that lines the wall of the exit tunnel in the center of the 70S ribosome. This Coxiella burnetii (strain CbuK_Q154) (Coxiella burnetii (strain Q154)) protein is Large ribosomal subunit protein uL22.